The following is a 559-amino-acid chain: MTDSKGYAVNDLVWAKMKGFSPWPGRISEPPAELRRITVKKNIPVRCIFFFGSNNYAWIEETQIKPYQEFKEKLLSSCKSAGFKEAVQQIEEFIASPENFQHLFASEQDNRPDPDVEFNKLREGGTESGEETTVNNTSTPAALESVETTPVTAKKSAAKKKVRASLPIKLHVDKVVVFRSVAASTTKARAIGNKAKAAAALNDTSSPKRKRKILNDTAGDVSSLDLDTFSPVRRNVPVSHLLNRPTVARPATPEIDMTSVSNALQSRNIQASNLKFGFLGLGIMGCGMVKNLLNSGHSVVVWNRTATKCRKFQEAGAEVADTPSDVIEMTDVTFSCVADPQVAKELVFGNCGVMSANLVGKGYVEMTGVDPETSHDIAEQIIAKGGRYLEAQIQGSKNQAEEGTLIILAAGERLLFEECQTCFEAISRNSFYMGDVGNATKMNLVLQMISGVMLAGIAEGLALADRAGLQQKDVLEVLELTSMSSELVMQKGNAIIKGEFPPQQALKHMQKDLKLALNMAEGLEQPLPITAASNEVYKHAKRLGYGSHDSSAVYVRARF.

Residues 9–70 (VNDLVWAKMK…ETQIKPYQEF (62 aa)) form the PWWP domain. Positions 106–137 (SEQDNRPDPDVEFNKLREGGTESGEETTVNNT) are disordered. Residues 108-125 (QDNRPDPDVEFNKLREGG) are compositionally biased toward basic and acidic residues. Residues 267–559 (RNIQASNLKF…SSAVYVRARF (293 aa)) are dehydrogenase domain. NAD(+) contacts are provided by residues 277-291 (GFLG…MVKN) and K511.

The protein belongs to the HIBADH-related family. NP60 subfamily. In terms of assembly, binds to mononucleosomes.

It is found in the chromosome. Its function is as follows. Nucleosome-destabilizing factor that is recruited to genes during transcriptional activation and colocalizes with a subset of trimethylated 'Lys-36' histone H3 (H3K36me3)-enriched regions. This Aedes aegypti (Yellowfever mosquito) protein is Cytokine-like nuclear factor N-PAC.